The sequence spans 1009 residues: Type VII secretion system accessory factor EsaA (1009 aa).

Helical transmembrane passes span 7–27 (IYAL…IFFV), 822–842 (ISPT…AYIF), 869–889 (VITS…VGLI), 903–923 (KFIL…TYLL), 928–948 (SIGM…MNNL), and 979–999 (IGLA…LNMF).

This sequence belongs to the EsaA family. As to quaternary structure, homodimer. Interacts with EssB.

It is found in the cell membrane. Component of the type VII secretion system (Ess). Provides together with EssB and other components such as EssC and EssE a secretion platform across the cytoplasmic membrane in the host. This Staphylococcus aureus (strain Mu50 / ATCC 700699) protein is Type VII secretion system accessory factor EsaA.